A 124-amino-acid chain; its full sequence is Fluoride-specific ion channel FluC (124 aa).

3 helical membrane-spanning segments follow: residues 5 to 27 (LFVA…FMLQ), 70 to 90 (VGLL…LLLI), and 95 to 115 (WIKA…MVYL). Residues glycine 74 and threonine 77 each contribute to the Na(+) site.

It belongs to the fluoride channel Fluc/FEX (TC 1.A.43) family.

It is found in the cell inner membrane. It carries out the reaction fluoride(in) = fluoride(out). Its activity is regulated as follows. Na(+) is not transported, but it plays an essential structural role and its presence is essential for fluoride channel function. In terms of biological role, fluoride-specific ion channel. Important for reducing fluoride concentration in the cell, thus reducing its toxicity. The polypeptide is Fluoride-specific ion channel FluC (Shewanella sediminis (strain HAW-EB3)).